Consider the following 315-residue polypeptide: Long form salivary protein D7L2 (315 aa).

A signal peptide spans 1–18 (MIVAPVVLSIFLQLFVQA). 4 disulfide bridges follow: cysteine 37–cysteine 73, cysteine 69–cysteine 128, cysteine 178–cysteine 211, and cysteine 252–cysteine 263.

The protein belongs to the PBP/GOBP family. In terms of assembly, interacts with host coagulation factor XII/F12 (inactive and activated). Interacts with host coagulation factor XI/F11 (inactive).

It localises to the secreted. In terms of biological role, modulates blood feeding of female mosquitoes on vertebrate species by binding and sequestering different mediators involved in the host response. Binds leukotriene B4 and leukotriene D4. Exhibits anticoagulant activity targeting the intrinsic coagulation pathway; binds coagulation factors XII and XI, preventing generation of activated FXIIa and FXIa. The protein is Long form salivary protein D7L2 of Anopheles gambiae (African malaria mosquito).